The sequence spans 315 residues: Protein OPG185 (315 aa).

A signal peptide spans 1–16 (MTRLPILLLLISLVYA). The Ig-like V-type domain maps to 17 to 121 (TPFPQTSKKI…NDTDKVDYEE (105 aa)). The Virion surface segment spans residues 17 to 279 (TPFPQTSKKI…SNYKTKDFVE (263 aa)). Cys34 and Cys103 are oxidised to a cystine. N-linked (GlcNAc...) asparagine; by host glycans are attached at residues Asn37, Asn69, Asn112, and Asn161. Positions 191 to 202 (SINTVSASSGES) are enriched in polar residues. Residues 191–213 (SINTVSASSGESTTDETPEPITD) are disordered. N-linked (GlcNAc...) asparagine; by host glycosylation occurs at Asn254. The chain crosses the membrane as a helical span at residues 280 to 303 (IFGITALIILSAVAIFCITYYIYN). Over 304–315 (KRSRKYKTENKV) the chain is Intravirion.

It belongs to the orthopoxvirus OPG185 family. In terms of assembly, heterodimerizes with OPG040. The heterodimer OPG185-OPG040 interacts with components of the entry fusion complex OPG143 and OPG094. Heterodimer with C3/VPC protein; disulfide-linked. In terms of processing, glycosylated; contains phosphate and sulfate-substituted glycans. O-glycosylation is required for hemagglutination and hemadsorption activities of infected cell membranes.

The protein resides in the virion membrane. It is found in the host membrane. Functionally, prevents cell to cell fusion by interacting with and directing the viral OPG040 protein on the host plasma membrane. The OPG185-OPG040 complex associates with components of the entry fusion complex (EFC) presumably to avoid superinfection and syncytium formation. Via its interaction with C3/VCP protein, protects the infected cell and probably also the extracellular enveloped virus from complement attack. The sequence is that of Protein OPG185 (OPG185) from Homo sapiens (Human).